Consider the following 185-residue polypeptide: Ribosome-recycling factor (185 aa).

Belongs to the RRF family.

The protein resides in the cytoplasm. Functionally, responsible for the release of ribosomes from messenger RNA at the termination of protein biosynthesis. May increase the efficiency of translation by recycling ribosomes from one round of translation to another. The sequence is that of Ribosome-recycling factor from Shewanella loihica (strain ATCC BAA-1088 / PV-4).